Reading from the N-terminus, the 117-residue chain is Large ribosomal subunit protein bL20 (117 aa).

Belongs to the bacterial ribosomal protein bL20 family.

Binds directly to 23S ribosomal RNA and is necessary for the in vitro assembly process of the 50S ribosomal subunit. It is not involved in the protein synthesizing functions of that subunit. The polypeptide is Large ribosomal subunit protein bL20 (Limosilactobacillus fermentum (strain NBRC 3956 / LMG 18251) (Lactobacillus fermentum)).